We begin with the raw amino-acid sequence, 468 residues long: MSSGKIAQVIGPVVDVLFAAGEKLPEINNALVVYKNDERKTKIVLEVALELGDGMVRTISMESTDGLTRGMEVLDTGRPISVPVGKETLGRVFNVLGDTIDLEAPFTEDAERQPIHKKAPTFDELSTSSEILETGIKVIDLLAPYLKGGKVGLFGGAGVGKTVLIQELIHNIAQEHGGISVFTGVGERTREGNDLYWEMKESGVIEKTAMVFGQMNEPPGARMRVALTGLTIAEYFRDVEGQDVLLFIDNIFRFTQAGSEVSALLGRMPSAVGYQPTLATEMGQLQERITSTKKGSVTSIQAIYVPADDYTDPAPATAFAHLDSTTNLERKLVQLGIYPAVDPLASSSRALAPEIVGEEHYAVAAEVKRVLQRYHELQDIIAILGMDELSDEEKTLVARARRIQFFLSQNFNVAEQFTGQPGSYVPVAETVRGFKEILDGKYDHLPEDAFRGVGSIEDVIAKAEKMGF.

Residue 155–162 participates in ATP binding; sequence GGAGVGKT.

This sequence belongs to the ATPase alpha/beta chains family. As to quaternary structure, F-type ATPases have 2 components, CF(1) - the catalytic core - and CF(0) - the membrane proton channel. CF(1) has five subunits: alpha(3), beta(3), gamma(1), delta(1), epsilon(1). CF(0) has three main subunits: a(1), b(2) and c(9-12). The alpha and beta chains form an alternating ring which encloses part of the gamma chain. CF(1) is attached to CF(0) by a central stalk formed by the gamma and epsilon chains, while a peripheral stalk is formed by the delta and b chains.

It is found in the cell membrane. It catalyses the reaction ATP + H2O + 4 H(+)(in) = ADP + phosphate + 5 H(+)(out). Its function is as follows. Produces ATP from ADP in the presence of a proton gradient across the membrane. The catalytic sites are hosted primarily by the beta subunits. This Streptococcus pneumoniae (strain Taiwan19F-14) protein is ATP synthase subunit beta.